The following is a 178-amino-acid chain: Protein GrpE (178 aa).

Belongs to the GrpE family. As to quaternary structure, homodimer.

It localises to the cytoplasm. In terms of biological role, participates actively in the response to hyperosmotic and heat shock by preventing the aggregation of stress-denatured proteins, in association with DnaK and GrpE. It is the nucleotide exchange factor for DnaK and may function as a thermosensor. Unfolded proteins bind initially to DnaJ; upon interaction with the DnaJ-bound protein, DnaK hydrolyzes its bound ATP, resulting in the formation of a stable complex. GrpE releases ADP from DnaK; ATP binding to DnaK triggers the release of the substrate protein, thus completing the reaction cycle. Several rounds of ATP-dependent interactions between DnaJ, DnaK and GrpE are required for fully efficient folding. The polypeptide is Protein GrpE (Rickettsia akari (strain Hartford)).